Reading from the N-terminus, the 96-residue chain is Auxin-responsive protein SAUR29 (96 aa).

Belongs to the ARG7 family.

The protein resides in the cell membrane. Functionally, functions as a positive effector of cell expansion through modulation of auxin transport. Involved in thermo-responsiveness of plant architecture. Enhances plasma membrane H(+)-ATPase. The sequence is that of Auxin-responsive protein SAUR29 from Arabidopsis thaliana (Mouse-ear cress).